We begin with the raw amino-acid sequence, 314 residues long: Small ribosomal subunit biogenesis GTPase RsgA (314 aa).

The 161-residue stretch at 78 to 238 folds into the CP-type G domain; it reads SEIFREKLIA…IIDSPGFQEF (161 aa). GTP contacts are provided by residues 127–130 and 180–188; these read NKID and GQSGVGKST. The Zn(2+) site is built by Cys262, Cys267, His269, and Cys275.

It belongs to the TRAFAC class YlqF/YawG GTPase family. RsgA subfamily. In terms of assembly, monomer. Associates with 30S ribosomal subunit, binds 16S rRNA. It depends on Zn(2+) as a cofactor.

It localises to the cytoplasm. One of several proteins that assist in the late maturation steps of the functional core of the 30S ribosomal subunit. Helps release RbfA from mature subunits. May play a role in the assembly of ribosomal proteins into the subunit. Circularly permuted GTPase that catalyzes slow GTP hydrolysis, GTPase activity is stimulated by the 30S ribosomal subunit. This Nitrosomonas europaea (strain ATCC 19718 / CIP 103999 / KCTC 2705 / NBRC 14298) protein is Small ribosomal subunit biogenesis GTPase RsgA.